Here is a 154-residue protein sequence, read N- to C-terminus: Prefoldin subunit alpha (154 aa).

The interval 123-154 is disordered; the sequence is EAEQLEQQAQQAQQQMMQQQMQAQQQPQDGEQ. Over residues 127–154 the composition is skewed to low complexity; it reads LEQQAQQAQQQMMQQQMQAQQQPQDGEQ.

This sequence belongs to the prefoldin alpha subunit family. Heterohexamer of two alpha and four beta subunits.

The protein resides in the cytoplasm. In terms of biological role, molecular chaperone capable of stabilizing a range of proteins. Seems to fulfill an ATP-independent, HSP70-like function in archaeal de novo protein folding. The polypeptide is Prefoldin subunit alpha (Halobacterium salinarum (strain ATCC 29341 / DSM 671 / R1)).